Here is a 679-residue protein sequence, read N- to C-terminus: DNA-directed RNA polymerase subunit beta' (679 aa).

Residues Cys-69, Cys-71, Cys-87, and Cys-90 each contribute to the Zn(2+) site. 3 residues coordinate Mg(2+): Asp-489, Asp-491, and Asp-493.

This sequence belongs to the RNA polymerase beta' chain family. RpoC1 subfamily. In terms of assembly, in plastids the minimal PEP RNA polymerase catalytic core is composed of four subunits: alpha, beta, beta', and beta''. When a (nuclear-encoded) sigma factor is associated with the core the holoenzyme is formed, which can initiate transcription. Requires Mg(2+) as cofactor. Zn(2+) is required as a cofactor.

It localises to the plastid. Its subcellular location is the chloroplast. The catalysed reaction is RNA(n) + a ribonucleoside 5'-triphosphate = RNA(n+1) + diphosphate. In terms of biological role, DNA-dependent RNA polymerase catalyzes the transcription of DNA into RNA using the four ribonucleoside triphosphates as substrates. The chain is DNA-directed RNA polymerase subunit beta' from Oenothera argillicola (Appalachian evening primrose).